A 394-amino-acid polypeptide reads, in one-letter code: Tubulin-like protein CetZ5 (394 aa).

GTP contacts are provided by residues 10 to 14 (QAGGN), 110 to 112 (GTG), Glu142, Asn169, and Asn187.

The protein belongs to the CetZ family.

The protein resides in the cytoplasm. Functionally, involved in cell shape control. This chain is Tubulin-like protein CetZ5, found in Haloferax volcanii (strain ATCC 29605 / DSM 3757 / JCM 8879 / NBRC 14742 / NCIMB 2012 / VKM B-1768 / DS2) (Halobacterium volcanii).